Reading from the N-terminus, the 325-residue chain is D site-binding protein (325 aa).

3 disordered regions span residues 1-100 (MARP…PGLL), 124-198 (LEHG…DPDT), and 212-255 (LALS…EQKD). Positions 17–28 (GPTGAPPGGGAL) are enriched in gly residues. 2 stretches are compositionally biased toward low complexity: residues 29–38 (LGLRSLLQGT) and 71–80 (AGPADASAGA). Residue Ser-86 is modified to Phosphoserine. Low complexity predominate over residues 88-100 (RGRPGAAPGPGLL). Residues 129-153 (PPSPPPPGGPSPAPSPVRTPAPSPR) show a composition bias toward pro residues. Low complexity predominate over residues 166–176 (PGHAPARAALG). Residues 221–236 (ETFDPRRHRFSEEELK) show a composition bias toward basic and acidic residues. Residues 255–318 (DEKYWSRRYK…SHYRAVLSRY (64 aa)) form the bZIP domain. Residues 257-279 (KYWSRRYKNNEAAKRSRDARRLK) are basic motif. The interval 283-297 (ISVRAAFLEKENALL) is leucine-zipper.

This sequence belongs to the bZIP family. PAR subfamily. As to quaternary structure, binds DNA as a homodimer or a heterodimer. Can form a heterodimer with TEF.

The protein resides in the nucleus. In terms of biological role, this transcriptional activator recognizes and binds to the sequence 5'-RTTAYGTAAY-3' found in the promoter of genes such as albumin, CYP2A4 and CYP2A5. It is not essential for circadian rhythm generation, but modulates important clock output genes. May be a direct target for regulation by the circadian pacemaker component clock. May affect circadian period and sleep regulation. This Bos taurus (Bovine) protein is D site-binding protein (DBP).